The chain runs to 465 residues: UDP-N-acetylmuramate--L-alanine ligase (465 aa).

Residue 114-120 coordinates ATP; it reads GTHGKTT.

It belongs to the MurCDEF family.

It localises to the cytoplasm. The enzyme catalyses UDP-N-acetyl-alpha-D-muramate + L-alanine + ATP = UDP-N-acetyl-alpha-D-muramoyl-L-alanine + ADP + phosphate + H(+). It participates in cell wall biogenesis; peptidoglycan biosynthesis. Its function is as follows. Cell wall formation. In Chelativorans sp. (strain BNC1), this protein is UDP-N-acetylmuramate--L-alanine ligase.